The primary structure comprises 151 residues: Myosin light polypeptide 6 (151 aa).

Cys2 bears the N-acetylcysteine mark. EF-hand domains follow at residues 7 to 42 (EQTA…LGQN), 84 to 119 (GCFE…LGEK), and 119 to 151 (KMTE…VLSG).

In terms of assembly, myosin is a hexamer of 2 heavy chains and 4 light chains.

Regulatory light chain of myosin. Does not bind calcium. The chain is Myosin light polypeptide 6 (MYL6) from Gallus gallus (Chicken).